The primary structure comprises 360 residues: Protein Wnt-2 (360 aa).

The signal sequence occupies residues 1–25 (MNAPLCGIWLWLPLLLTWLTPEVSS). 11 disulfide bridges follow: C76/C87, C127/C135, C137/C157, C206/C220, C208/C215, C278/C309, C294/C304, C308/C348, C324/C339, C326/C336, and C331/C332. S212 carries O-palmitoleoyl serine; by PORCN lipidation. N295 is a glycosylation site (N-linked (GlcNAc...) asparagine).

It belongs to the Wnt family. Palmitoleoylation is required for efficient binding to frizzled receptors. Depalmitoleoylation leads to Wnt signaling pathway inhibition.

It is found in the secreted. Its subcellular location is the extracellular space. The protein localises to the extracellular matrix. In terms of biological role, ligand for members of the frizzled family of seven transmembrane receptors. Functions in the canonical Wnt signaling pathway that results in activation of transcription factors of the TCF/LEF family. Functions as a upstream regulator of FGF10 expression. Plays an important role in embryonic lung development. May contribute to embryonic brain development by regulating the proliferation of dopaminergic precursors and neurons. The protein is Protein Wnt-2 (WNT2) of Otolemur garnettii (Small-eared galago).